We begin with the raw amino-acid sequence, 352 residues long: tRNA N6-adenosine threonylcarbamoyltransferase (352 aa).

Residues H117 and H121 each coordinate Fe cation. Substrate-binding positions include L140 to G144, D173, G186, and N287. Residue D315 participates in Fe cation binding.

This sequence belongs to the KAE1 / TsaD family. The cofactor is Fe(2+).

The protein localises to the cytoplasm. The catalysed reaction is L-threonylcarbamoyladenylate + adenosine(37) in tRNA = N(6)-L-threonylcarbamoyladenosine(37) in tRNA + AMP + H(+). Functionally, required for the formation of a threonylcarbamoyl group on adenosine at position 37 (t(6)A37) in tRNAs that read codons beginning with adenine. Is involved in the transfer of the threonylcarbamoyl moiety of threonylcarbamoyl-AMP (TC-AMP) to the N6 group of A37, together with TsaE and TsaB. TsaD likely plays a direct catalytic role in this reaction. This is tRNA N6-adenosine threonylcarbamoyltransferase from Psychrobacter cryohalolentis (strain ATCC BAA-1226 / DSM 17306 / VKM B-2378 / K5).